We begin with the raw amino-acid sequence, 360 residues long: G-protein coupled receptor 15 (360 aa).

The Extracellular segment spans residues 1 to 33 (MDPEETSVYLDYYYATSPNSDIRETHSHVPYTS). Residues 34–54 (VFLPVFYTAVFLTGVLGNLVL) traverse the membrane as a helical segment. The Cytoplasmic segment spans residues 55-69 (MGALHFKPGSRRLID). The helical transmembrane segment at 70–90 (IFIINLAASDFIFLVTLPLWV) threads the bilayer. Residues 91–120 (DKEASLGLWRTGSFLCKGSSYMISVNMHCS) lie on the Extracellular side of the membrane. A helical membrane pass occupies residues 121–141 (VLLLTCMSVDRYLAIVWPVVS). The Cytoplasmic portion of the chain corresponds to 142-149 (RKFRRTDC). A helical membrane pass occupies residues 150 to 170 (AYVVCASIWFISCLLGLPTLL). The Extracellular segment spans residues 171–192 (SRELTLIDDKPYCAEKKATPIK). Residues 193-213 (LIWSLVALIFTFFVPLLSIVT) form a helical membrane-spanning segment. Over 214-239 (CYCCIARKLCAHYQQSGKHNKKLKKS) the chain is Cytoplasmic. The helical transmembrane segment at 240-260 (IKIIFIVVAAFLVSWLPFNTF) threads the bilayer. Over 261-284 (KFLAIVSGLRQEHYLPSAILQLGM) the chain is Extracellular. A helical membrane pass occupies residues 285–305 (EVSGPLAFANSCVNPFIYYIF). At 306–360 (DSYIRRAIVHCLCPCLKNYDFGSSTETSDSHLTKALSTFIHAEDFARRRKRSVSL) the chain is on the cytoplasmic side. Residue Ser359 is modified to Phosphoserine.

The protein belongs to the G-protein coupled receptor 1 family. As to quaternary structure, interacts with adapter YWHAE; this interaction promotes ER-to-Golgi transport of GPR15. Interacts with GNAI1; this interaction initiates the signaling pathway. Phosphorylation is necessary for YWHAE binding and efficient surface expression. Post-translationally, O-glycosylated. Sialylated O-glycans in the N-terminal tail inhibits binding of GPR15LG. In terms of processing, sulfation is required for efficient binding of GPR15LG. Highly expressed in lymphoid tissues, including macrophages and peripheral blood mononuclear cells.

It localises to the cell membrane. Functionally, g protein-coupled receptor that plays an important role in immune homeostasis. Acts via its natural ligand GPR15LG, a chemokine-like polypeptide strongly expressed in gastrointestinal tissues. GPR15-GPR15LG signaling axis regulates intestinal homeostasis and inflammation through the migration of immune cells. Controls thereby the specific homing of T-cells, particularly FOXP3+ regulatory T-cells (Tregs), to the large intestine lamina propria. Also required for skin localization of thymus-derived dendritic epidermal T-cells. Plays an important role in mediating cytoprotective function as well as angiogenesis of thrombomodulin. Mechanistically, preferentially signals through the Gi/o pathway to inhibit adenylate cyclase activity and activate a phosphatidylinositol-calcium second messenger system that regulates the release of Ca(2+) ions from intracellular stores. In terms of biological role, (Microbial infection) Acts as an alternative coreceptor with CD4 for HIV-1 infection. This Homo sapiens (Human) protein is G-protein coupled receptor 15 (GPR15).